The primary structure comprises 390 residues: S-adenosylmethionine synthase 1 (390 aa).

E9 is a binding site for Mg(2+). ATP is bound at residue H15. Residue E43 participates in K(+) binding. L-methionine contacts are provided by E56 and Q99. ATP-binding positions include 167–169, 235–238, D246, 252–253, A269, K273, and K277; these read DGK, SGRF, and RK. D246 contributes to the L-methionine binding site. K277 provides a ligand contact to L-methionine.

Belongs to the AdoMet synthase family. Homotetramer. Mn(2+) serves as cofactor. Mg(2+) is required as a cofactor. It depends on Co(2+) as a cofactor. Requires K(+) as cofactor.

The protein localises to the cytoplasm. It catalyses the reaction L-methionine + ATP + H2O = S-adenosyl-L-methionine + phosphate + diphosphate. It participates in amino-acid biosynthesis; S-adenosyl-L-methionine biosynthesis; S-adenosyl-L-methionine from L-methionine: step 1/1. Catalyzes the formation of S-adenosylmethionine from methionine and ATP. The reaction comprises two steps that are both catalyzed by the same enzyme: formation of S-adenosylmethionine (AdoMet) and triphosphate, and subsequent hydrolysis of the triphosphate. The protein is S-adenosylmethionine synthase 1 (SAM1) of Actinidia chinensis var. chinensis (Chinese soft-hair kiwi).